The chain runs to 180 residues: Acireductone dioxygenase (180 aa).

Fe(2+)-binding residues include His96, His98, Glu102, and His140. 4 residues coordinate Ni(2+): His96, His98, Glu102, and His140.

This sequence belongs to the acireductone dioxygenase (ARD) family. As to quaternary structure, monomer. The cofactor is Fe(2+). Ni(2+) serves as cofactor.

It carries out the reaction 1,2-dihydroxy-5-(methylsulfanyl)pent-1-en-3-one + O2 = 3-(methylsulfanyl)propanoate + CO + formate + 2 H(+). It catalyses the reaction 1,2-dihydroxy-5-(methylsulfanyl)pent-1-en-3-one + O2 = 4-methylsulfanyl-2-oxobutanoate + formate + 2 H(+). It participates in amino-acid biosynthesis; L-methionine biosynthesis via salvage pathway; L-methionine from S-methyl-5-thio-alpha-D-ribose 1-phosphate: step 5/6. In terms of biological role, catalyzes 2 different reactions between oxygen and the acireductone 1,2-dihydroxy-3-keto-5-methylthiopentene (DHK-MTPene) depending upon the metal bound in the active site. Fe-containing acireductone dioxygenase (Fe-ARD) produces formate and 2-keto-4-methylthiobutyrate (KMTB), the alpha-ketoacid precursor of methionine in the methionine recycle pathway. Ni-containing acireductone dioxygenase (Ni-ARD) produces methylthiopropionate, carbon monoxide and formate, and does not lie on the methionine recycle pathway. The chain is Acireductone dioxygenase from Synechococcus sp. (strain WH7803).